Reading from the N-terminus, the 111-residue chain is Disintegrin CV-11-alpha (111 aa).

An N-terminal signal peptide occupies residues 1–20; sequence MIQVLLVIICLAVFPYQGSS. The propeptide occupies 21–46; the sequence is IILESGNVNDFELVYPKKVTVLPTGA. Residues 47-111 enclose the Disintegrin domain; it reads MNSAHPCCDP…SDCPRNPWKD (65 aa). Cystine bridges form between Cys53–Cys76, Cys67–Cys73, Cys72–Cys97, and Cys85–Cys104. A Cell attachment site motif is present at residues 89-91; it reads KGD.

The protein belongs to the disintegrin family. Dimeric disintegrin subfamily. Heterodimer with subunit beta; disulfide-linked. Expressed by the venom gland.

It localises to the secreted. Functionally, inhibits ADP-induced human platelet aggregation. Antagonist of alpha-IIb/beta-3 (ITGA2B/ITGB3). The sequence is that of Disintegrin CV-11-alpha from Cerastes vipera (Sahara sand viper).